The chain runs to 72 residues: Protein kish-A (72 aa).

The first 26 residues, 1–26 (MSAIFNFQSLLTVILLLICTCAYIRS), serve as a signal peptide directing secretion. Over 27 to 53 (LAPSLLDKNKTGLLGIFWKCARIGERK) the chain is Extracellular. N-linked (GlcNAc...) asparagine glycosylation occurs at asparagine 35. Residues 54–71 (SPYVAVCCVVMAFSILFV) form a helical membrane-spanning segment. Glutamine 72 is a topological domain (cytoplasmic).

The protein belongs to the KISH family.

Its subcellular location is the golgi apparatus membrane. In terms of biological role, involved in the early part of the secretory pathway. This Gallus gallus (Chicken) protein is Protein kish-A (TMEM167A).